A 132-amino-acid chain; its full sequence is UPF0299 membrane protein YohJ (132 aa).

Over 1-6 (MSKTLN) the chain is Periplasmic. A helical membrane pass occupies residues 7–27 (IIWQYLRAFVLIYACLYAGIF). The Cytoplasmic portion of the chain corresponds to 28–30 (IAS). The helical transmembrane segment at 31-51 (LLPVTIPGSIIGMLILFVLLA) threads the bilayer. The Periplasmic segment spans residues 52–62 (LQILPAKWVNP). Residues 63–83 (GCYVLIRYMALLFVPIGVGVM) traverse the membrane as a helical segment. Over 84-92 (QYFDLLRAQ) the chain is Cytoplasmic. The helical transmembrane segment at 93–113 (FGPVVVSCAISTLVVFLVVSW) threads the bilayer. Over 114-132 (SSQLVHGERKVVGQKGSEE) the chain is Periplasmic.

Belongs to the UPF0299 family.

It is found in the cell inner membrane. This is UPF0299 membrane protein YohJ (yohJ) from Escherichia coli O157:H7.